The following is a 207-amino-acid chain: Probable nicotinate-nucleotide adenylyltransferase (207 aa).

The protein belongs to the NadD family.

The catalysed reaction is nicotinate beta-D-ribonucleotide + ATP + H(+) = deamido-NAD(+) + diphosphate. The protein operates within cofactor biosynthesis; NAD(+) biosynthesis; deamido-NAD(+) from nicotinate D-ribonucleotide: step 1/1. Functionally, catalyzes the reversible adenylation of nicotinate mononucleotide (NaMN) to nicotinic acid adenine dinucleotide (NaAD). The sequence is that of Probable nicotinate-nucleotide adenylyltransferase from Desulfitobacterium hafniense (strain Y51).